A 401-amino-acid chain; its full sequence is Nicotinamide/nicotinic acid mononucleotide adenylyltransferase 1 (401 aa).

2 disordered regions span residues 1–30 (MDPTRAPDFKPPSADEELIPPPDPESKIPK) and 48–123 (APFN…RGVQ). A compositionally biased stretch (basic residues) spans 52–69 (IKRKKKHPKHHHHHHHSR). A phosphoserine mark is found at Ser-91, Ser-95, Ser-96, and Ser-111. Ser-173 and Phe-174 together coordinate NAD(+). His-181 contacts ATP. NAD(+)-binding residues include Thr-253, Gly-288, Asp-290, Trp-301, Arg-320, and Asn-351. 356–359 (TKVR) contacts ATP.

The protein belongs to the eukaryotic NMN adenylyltransferase family. As to quaternary structure, homotetramer. It depends on Ni(2+) as a cofactor.

It localises to the cytoplasm. The protein localises to the nucleus. It carries out the reaction beta-nicotinamide D-ribonucleotide + ATP + H(+) = diphosphate + NAD(+). It catalyses the reaction nicotinate beta-D-ribonucleotide + ATP + H(+) = deamido-NAD(+) + diphosphate. Its pathway is cofactor biosynthesis; NAD(+) biosynthesis; deamido-NAD(+) from nicotinate D-ribonucleotide: step 1/1. It participates in cofactor biosynthesis; NAD(+) biosynthesis; NAD(+) from nicotinamide D-ribonucleotide: step 1/1. Its function is as follows. Catalyzes the formation of NAD(+) from nicotinamide mononucleotide (NMN) and ATP. Can also use the deamidated form; nicotinic acid mononucleotide (NaMN) as substrate to form deamido-NAD(+) (NaAD). Key enzyme in both de novo and salvage pathways for NAD(+) biosynthesis. Predominantly acts in the salvage pathways via NMN. This is Nicotinamide/nicotinic acid mononucleotide adenylyltransferase 1 from Saccharomyces cerevisiae (strain ATCC 204508 / S288c) (Baker's yeast).